The sequence spans 445 residues: Serine/threonine-protein kinase Nek2 (445 aa).

The 264-residue stretch at 8-271 (YEVLYTIGTG…VEEILENPLI (264 aa)) folds into the Protein kinase domain. ATP is bound by residues 14 to 22 (IGTGSYGRC) and Lys-37. Asp-141 (proton acceptor) is an active-site residue. Thr-170 is subject to Phosphothreonine; by autocatalysis. Ser-171 is subject to Phosphoserine; by autocatalysis. A phosphothreonine; by autocatalysis mark is found at Thr-175 and Thr-179. The residue at position 184 (Ser-184) is a Phosphoserine. Ser-241 carries the phosphoserine; by autocatalysis modification. Residues 264–445 (EILENPLIAD…LKSRQILGMR (182 aa)) are interaction with PCNT. Phosphoserine occurs at positions 296 and 300. The segment at 301–445 (PVLSELKLKE…LKSRQILGMR (145 aa)) is interaction with CEP85. The stretch at 303-362 (LSELKLKEIQLQERERALKAREERLEQKEQELCVRERLAEDKLARAENLLKNYSLLKERK) forms a coiled coil. A leucine-zipper region spans residues 306-334 (LKLKEIQLQERERALKAREERLEQKEQEL). Residues 329–445 (QKEQELCVRE…LKSRQILGMR (117 aa)) form a necessary for interaction with MAD1L1 region. The required for microtubule binding and for localization to the centrosomes stretch occupies residues 333-370 (ELCVRERLAEDKLARAENLLKNYSLLKERKFLSLASNP). Residues Ser-356 and Ser-365 each carry the phosphoserine; by STK3/MST2 modification. Phosphoserine occurs at positions 387, 390, 397, and 402. The interaction with SAV1 and STK3/MST2 stretch occupies residues 403–439 (QLTSKSKCKDLKKRLHAAQLRAQALSDIEKNYQLKSR). Ser-406 is modified (phosphoserine; by STK3/MST2). A coiled-coil region spans residues 406–430 (SKSKCKDLKKRLHAAQLRAQALSDI). Ser-428 bears the Phosphoserine mark. The residue at position 438 (Ser-438) is a Phosphoserine; by STK3/MST2.

This sequence belongs to the protein kinase superfamily. NEK Ser/Thr protein kinase family. NIMA subfamily. As to quaternary structure, isoform 1, isoform 2 and isoform 4 form homo- and heterodimers. Interacts with NECAB3 and HMGA2. Isoform 1 interacts with CDC20, CTNB1, MAD1L1, MAPK, NEK11, NPM1, NDC80, PCNT and SGO1. Isoform 1 interacts with STK3/MST2 (via SARAH domain) and SAV1 (via SARAH domain). Isoform 1 and isoform 2 interact with MAD2L1. Isoform 1 and isoform 4 interact with PPP1CA and PPP1CC. Interacts with CEP68; the interaction leads to phosphorylation of CEP68. Interacts with CNTLN; the interaction leads to phosphorylation of CNTLN. Isoform 1 interacts with CEP85. Interacts with CCDC102B; the interaction leads to phosphorylation of CCDC102B. Mg(2+) serves as cofactor. Activated by autophosphorylation. Protein phosphatase 1 represses autophosphorylation and activation of isoform 1 by dephosphorylation. Phosphorylation by STK3/MST2 is necessary for its localization to the centrosome. As to expression, isoform 1 and isoform 2 are expressed in peripheral blood T-cells and a wide variety of transformed cell types. Isoform 1 and isoform 4 are expressed in the testis. Up-regulated in various cancer cell lines, as well as primary breast tumors.

It is found in the nucleus. The protein localises to the nucleolus. It localises to the cytoplasm. The protein resides in the cytoskeleton. Its subcellular location is the microtubule organizing center. It is found in the centrosome. The protein localises to the spindle pole. It localises to the chromosome. The protein resides in the centromere. Its subcellular location is the kinetochore. It carries out the reaction L-seryl-[protein] + ATP = O-phospho-L-seryl-[protein] + ADP + H(+). It catalyses the reaction L-threonyl-[protein] + ATP = O-phospho-L-threonyl-[protein] + ADP + H(+). With respect to regulation, isoform 1 is inhibited by ionizing radiation in the presence of PPP1CA. Its catalytic activity is inhibited by the inhibitor CCT241950. In the presence of this inhibitor, displays an autoinhibited conformation: Tyr-70 side chain points into the active site, interacts with the activation loop, and blocks the alphaC helix. In terms of biological role, protein kinase which is involved in the control of centrosome separation and bipolar spindle formation in mitotic cells and chromatin condensation in meiotic cells. Regulates centrosome separation (essential for the formation of bipolar spindles and high-fidelity chromosome separation) by phosphorylating centrosomal proteins such as CROCC, CEP250 and NINL, resulting in their displacement from the centrosomes. Regulates kinetochore microtubule attachment stability in mitosis via phosphorylation of NDC80. Involved in regulation of mitotic checkpoint protein complex via phosphorylation of CDC20 and MAD2L1. Plays an active role in chromatin condensation during the first meiotic division through phosphorylation of HMGA2. Phosphorylates: PPP1CC; SGO1; NECAB3 and NPM1. Essential for localization of MAD2L1 to kinetochore and MAPK1 and NPM1 to the centrosome. Phosphorylates CEP68 and CNTLN directly or indirectly. NEK2-mediated phosphorylation of CEP68 promotes CEP68 dissociation from the centrosome and its degradation at the onset of mitosis. Involved in the regulation of centrosome disjunction. Phosphorylates CCDC102B either directly or indirectly which causes CCDC102B to dissociate from the centrosome and allows for centrosome separation. Functionally, phosphorylates and activates NEK11 in G1/S-arrested cells. Its function is as follows. Not present in the nucleolus and, in contrast to isoform 1, does not phosphorylate and activate NEK11 in G1/S-arrested cells. The sequence is that of Serine/threonine-protein kinase Nek2 (NEK2) from Homo sapiens (Human).